The chain runs to 234 residues: ATP-dependent dethiobiotin synthetase BioD (234 aa).

Residue G12–I17 participates in ATP binding. T16 contacts Mg(2+). K39 is a catalytic residue. Residue T43 coordinates substrate. ATP-binding positions include D47, E108–G111, S168–C169, and P200–L202. Mg(2+) contacts are provided by D47 and E108.

It belongs to the dethiobiotin synthetase family. Homodimer. Mg(2+) is required as a cofactor.

It is found in the cytoplasm. The catalysed reaction is (7R,8S)-7,8-diammoniononanoate + CO2 + ATP = (4R,5S)-dethiobiotin + ADP + phosphate + 3 H(+). It carries out the reaction (7R,8S)-8-amino-7-(carboxyamino)nonanoate + ATP = (4R,5S)-dethiobiotin + ADP + phosphate + H(+). It functions in the pathway cofactor biosynthesis; biotin biosynthesis; biotin from 7,8-diaminononanoate: step 1/2. Catalyzes a mechanistically unusual reaction, the ATP-dependent insertion of CO2 between the N7 and N8 nitrogen atoms of 7,8-diaminopelargonic acid (DAPA, also called 7,8-diammoniononanoate) to form a ureido ring. This cyanobacterium does not encode bioA (which catalyzes the formation of the precursor for this reaction in the cannonical pathway), instead it encodes bioU, which replaces bioA and also performs the first half of the cannonical BioD reaction. Thus in this organism BioD has a different substrate. The sequence is that of ATP-dependent dethiobiotin synthetase BioD from Rippkaea orientalis (strain PCC 8801 / RF-1) (Cyanothece sp. (strain PCC 8801)).